The sequence spans 95 residues: Co-chaperonin GroES (95 aa).

Residues 20–45 form a disordered region; that stretch reads KTKGGLIIPDSAKEKPAEGEITSVGE.

The protein belongs to the GroES chaperonin family. Heptamer of 7 subunits arranged in a ring. Interacts with the chaperonin GroEL.

It localises to the cytoplasm. Its function is as follows. Together with the chaperonin GroEL, plays an essential role in assisting protein folding. The GroEL-GroES system forms a nano-cage that allows encapsulation of the non-native substrate proteins and provides a physical environment optimized to promote and accelerate protein folding. GroES binds to the apical surface of the GroEL ring, thereby capping the opening of the GroEL channel. The chain is Co-chaperonin GroES from Paracoccus denitrificans.